A 191-amino-acid polypeptide reads, in one-letter code: dTTP/UTP pyrophosphatase (191 aa).

The Proton acceptor role is filled by D65.

The protein belongs to the Maf family. YhdE subfamily. A divalent metal cation serves as cofactor.

The protein localises to the cytoplasm. It catalyses the reaction dTTP + H2O = dTMP + diphosphate + H(+). The catalysed reaction is UTP + H2O = UMP + diphosphate + H(+). Nucleoside triphosphate pyrophosphatase that hydrolyzes dTTP and UTP. May have a dual role in cell division arrest and in preventing the incorporation of modified nucleotides into cellular nucleic acids. This Leptospira biflexa serovar Patoc (strain Patoc 1 / Ames) protein is dTTP/UTP pyrophosphatase.